A 220-amino-acid polypeptide reads, in one-letter code: GILT-like protein CBG03282 (220 aa).

Positions 1 to 22 are cleaved as a signal peptide; sequence MTIIRTLFVYYSFLFILVLCSS. Asn131 is a glycosylation site (N-linked (GlcNAc...) asparagine).

Belongs to the GILT family.

Its subcellular location is the secreted. This is GILT-like protein CBG03282 from Caenorhabditis briggsae.